A 434-amino-acid chain; its full sequence is Glutamate-1-semialdehyde 2,1-aminomutase 1 (434 aa).

K270 carries the N6-(pyridoxal phosphate)lysine modification.

It belongs to the class-III pyridoxal-phosphate-dependent aminotransferase family. HemL subfamily. Homodimer. It depends on pyridoxal 5'-phosphate as a cofactor.

Its subcellular location is the cytoplasm. The catalysed reaction is (S)-4-amino-5-oxopentanoate = 5-aminolevulinate. The protein operates within porphyrin-containing compound metabolism; protoporphyrin-IX biosynthesis; 5-aminolevulinate from L-glutamyl-tRNA(Glu): step 2/2. The polypeptide is Glutamate-1-semialdehyde 2,1-aminomutase 1 (Bacillus cereus (strain AH187)).